Consider the following 346-residue polypeptide: Probable disease resistance protein At5g45440 (346 aa).

Residues 38-116 (KQVEDRVETD…AYAPRIWVSM (79 aa)) form the NB-ARC domain. ATP is bound at residue 85 to 92 (GEYGVGKT). The interval 315–346 (FDDGKANQNGSKDGKTDSVDNPNSEESKTKPL) is disordered.

Possible disease resistance protein. The chain is Probable disease resistance protein At5g45440 from Arabidopsis thaliana (Mouse-ear cress).